A 169-amino-acid polypeptide reads, in one-letter code: MQIETLTVEPLTKEAFAPFGDVIEVEGAQLRLINNGTTERYHDLARVEAAGTQTRALINIFRGQSFAAPIDIMMMERHPFGSQAFIPLNGRPFLVVVAEDAGAGPARPRAFLARGDQGVNYLRNIWHHPLLALEQKSDFLVVDRAGREDNLEEYFFSDYAYRIETTQTA.

This sequence belongs to the ureidoglycolate lyase family. Homodimer. The cofactor is Ni(2+).

The enzyme catalyses (S)-ureidoglycolate = urea + glyoxylate. The protein operates within nitrogen metabolism; (S)-allantoin degradation. In terms of biological role, catalyzes the catabolism of the allantoin degradation intermediate (S)-ureidoglycolate, generating urea and glyoxylate. Involved in the utilization of allantoin as nitrogen source. This chain is Ureidoglycolate lyase, found in Brucella melitensis biotype 2 (strain ATCC 23457).